The chain runs to 324 residues: Quinolinate synthase (324 aa).

Iminosuccinate is bound by residues His39 and Ser56. Cys101 lines the [4Fe-4S] cluster pocket. Iminosuccinate contacts are provided by residues 127–129 (YIN) and Ser144. Cys187 is a [4Fe-4S] cluster binding site. Residues 213-215 (HPE) and Thr230 contribute to the iminosuccinate site. Cys280 serves as a coordination point for [4Fe-4S] cluster.

It belongs to the quinolinate synthase family. Type 2 subfamily. The cofactor is [4Fe-4S] cluster.

Its subcellular location is the cytoplasm. The enzyme catalyses iminosuccinate + dihydroxyacetone phosphate = quinolinate + phosphate + 2 H2O + H(+). Its pathway is cofactor biosynthesis; NAD(+) biosynthesis; quinolinate from iminoaspartate: step 1/1. Functionally, catalyzes the condensation of iminoaspartate with dihydroxyacetone phosphate to form quinolinate. This is Quinolinate synthase from Nostoc punctiforme (strain ATCC 29133 / PCC 73102).